A 1196-amino-acid chain; its full sequence is ATP-dependent helicase/deoxyribonuclease subunit B (1196 aa).

Residues Cys823, Cys1149, Cys1152, and Cys1158 each coordinate [4Fe-4S] cluster.

This sequence belongs to the helicase family. AddB/RexB type 2 subfamily. In terms of assembly, heterodimer of AddA and RexB. It depends on Mg(2+) as a cofactor. [4Fe-4S] cluster is required as a cofactor.

Its function is as follows. The heterodimer acts as both an ATP-dependent DNA helicase and an ATP-dependent, dual-direction single-stranded exonuclease. Recognizes the chi site generating a DNA molecule suitable for the initiation of homologous recombination. This subunit has 5' -&gt; 3' nuclease activity but not helicase activity. The polypeptide is ATP-dependent helicase/deoxyribonuclease subunit B (Enterococcus faecalis (strain ATCC 700802 / V583)).